A 320-amino-acid polypeptide reads, in one-letter code: Olfactory receptor 52W1 (320 aa).

Over M1–T30 the chain is Extracellular. An N-linked (GlcNAc...) asparagine glycan is attached at N8. A helical membrane pass occupies residues W31–P51. Over A52–T59 the chain is Cytoplasmic. A helical transmembrane segment spans residues L60–T80. Topologically, residues S81 to V104 are extracellular. Residues Q105–C125 traverse the membrane as a helical segment. At D126 to A144 the chain is on the cytoplasmic side. The chain crosses the membrane as a helical span at residues C145 to P165. The Extracellular segment spans residues L166 to N201. A helical transmembrane segment spans residues L202–S222. At Y223–A242 the chain is on the cytoplasmic side. The helical transmembrane segment at F243–S263 threads the bilayer. Residues Y264 to H279 are Extracellular-facing. Residues I280 to A300 traverse the membrane as a helical segment. Residues R301–L320 lie on the Cytoplasmic side of the membrane.

It belongs to the G-protein coupled receptor 1 family.

Its subcellular location is the cell membrane. Functionally, odorant receptor. This Homo sapiens (Human) protein is Olfactory receptor 52W1 (OR52W1).